The sequence spans 580 residues: Phosphomethylpyrimidine synthase (580 aa).

A disordered region spans residues Met1–Leu58. Substrate is bound by residues Asn180, Met209, Tyr238, His274, Ser294 to Gly296, Asp335 to Arg338, and Glu374. A Zn(2+)-binding site is contributed by His378. Tyr401 contacts substrate. Residue His442 participates in Zn(2+) binding. The [4Fe-4S] cluster site is built by Cys522, Cys525, and Cys530. Residues Val554 to Glu580 are disordered.

The protein belongs to the ThiC family. Requires [4Fe-4S] cluster as cofactor.

The catalysed reaction is 5-amino-1-(5-phospho-beta-D-ribosyl)imidazole + S-adenosyl-L-methionine = 4-amino-2-methyl-5-(phosphooxymethyl)pyrimidine + CO + 5'-deoxyadenosine + formate + L-methionine + 3 H(+). It functions in the pathway cofactor biosynthesis; thiamine diphosphate biosynthesis. Its function is as follows. Catalyzes the synthesis of the hydroxymethylpyrimidine phosphate (HMP-P) moiety of thiamine from aminoimidazole ribotide (AIR) in a radical S-adenosyl-L-methionine (SAM)-dependent reaction. In Corynebacterium efficiens (strain DSM 44549 / YS-314 / AJ 12310 / JCM 11189 / NBRC 100395), this protein is Phosphomethylpyrimidine synthase.